We begin with the raw amino-acid sequence, 87 residues long: Small ribosomal subunit protein uS19 (87 aa).

It belongs to the universal ribosomal protein uS19 family.

Its function is as follows. Protein S19 forms a complex with S13 that binds strongly to the 16S ribosomal RNA. This chain is Small ribosomal subunit protein uS19 (rpsS), found in Mycoplasma pneumoniae (strain ATCC 29342 / M129 / Subtype 1) (Mycoplasmoides pneumoniae).